Reading from the N-terminus, the 555-residue chain is Potassium-transporting ATPase potassium-binding subunit (555 aa).

10 helical membrane-spanning segments follow: residues 2–22 (IWVAVVITMLLFILVAKPTGI), 60–80 (QYALSLVLLNGFMIVVVYFIF), 130–150 (IGITFLMFAAPATTLALVMAF), 173–193 (VFLPITFMAALVFVALGVPQT), 246–266 (MSNILQMMLMMLLPTALPFTY), 278–298 (ILFVSLFMVFLLGFITITTSE), 374–394 (AGFVNIIMYAIIAVFISGLMV), 412–432 (LIAVTILFHPLLILGFSALAL), 483–503 (LVMFLGRYFSLITMLAVAASL), and 525–545 (GIFIGTIVIVGALTFFPMLVL).

It belongs to the KdpA family. The system is composed of three essential subunits: KdpA, KdpB and KdpC.

Its subcellular location is the cell membrane. In terms of biological role, part of the high-affinity ATP-driven potassium transport (or Kdp) system, which catalyzes the hydrolysis of ATP coupled with the electrogenic transport of potassium into the cytoplasm. This subunit binds the extracellular potassium ions and delivers the ions to the membrane domain of KdpB through an intramembrane tunnel. The chain is Potassium-transporting ATPase potassium-binding subunit from Bacillus cereus (strain AH187).